Consider the following 128-residue polypeptide: Glycine cleavage system H protein (128 aa).

A Lipoyl-binding domain is found at 25 to 107; it reads TITVGITHHA…YGAGWFFKIK (83 aa). The residue at position 66 (K66) is an N6-lipoyllysine.

The protein belongs to the GcvH family. In terms of assembly, the glycine cleavage system is composed of four proteins: P, T, L and H. (R)-lipoate serves as cofactor.

Its function is as follows. The glycine cleavage system catalyzes the degradation of glycine. The H protein shuttles the methylamine group of glycine from the P protein to the T protein. The chain is Glycine cleavage system H protein from Neisseria meningitidis serogroup C (strain 053442).